Here is a 293-residue protein sequence, read N- to C-terminus: Protease HtpX (293 aa).

2 helical membrane-spanning segments follow: residues Ile-4–Leu-24 and Gly-34–Ser-54. His-139 is a binding site for Zn(2+). Residue Glu-140 is part of the active site. A Zn(2+)-binding site is contributed by His-143. The next 2 membrane-spanning stretches (helical) occupy residues Val-158–Met-178 and Leu-193–Ile-213. Glu-222 lines the Zn(2+) pocket.

Belongs to the peptidase M48B family. Requires Zn(2+) as cofactor.

It is found in the cell inner membrane. This Escherichia coli O127:H6 (strain E2348/69 / EPEC) protein is Protease HtpX.